The sequence spans 1548 residues: Dicer-like protein 1 (1548 aa).

The span at 1-41 (MGDPAAHEMADLERGFSSEDDAEYRSGDDEASKFVENEPSK) shows a compositional bias: basic and acidic residues. A disordered region spans residues 1–48 (MGDPAAHEMADLERGFSSEDDAEYRSGDDEASKFVENEPSKRGKISQK). Residues 106-289 (LFERAKQQNT…QAAIELEGLL (184 aa)) enclose the Helicase ATP-binding domain. 119-126 (LDTGSGKT) contacts ATP. The short motif at 232–235 (DEAH) is the DEAH box element. Residues 428-589 (TLSKLLEEYF…FCNTQPEDRL (162 aa)) form the Helicase C-terminal domain. The Dicer dsRNA-binding fold domain maps to 624–718 (SLPILQAFLN…RSKFVEKRHV (95 aa)). The region spanning 871–1006 (PLLRHVADRD…FVLEPMRISP (136 aa)) is the PAZ domain. 2 RNase III domains span residues 1051–1197 (LTKD…MTTR) and 1248–1411 (AQKI…VDSK). Mg(2+)-binding residues include E1288, D1397, and E1400. The DRBM domain occupies 1445–1518 (TFFTQYVFET…ARKALDKLRS (74 aa)). Zn(2+) is bound by residues C1457, H1489, C1530, and C1532.

The protein belongs to the helicase family. Dicer subfamily. Mg(2+) serves as cofactor. Mn(2+) is required as a cofactor.

In terms of biological role, dicer-like endonuclease involved in cleaving double-stranded RNA in the RNA interference (RNAi) pathway. Produces 21 to 25 bp dsRNAs (siRNAs) which target the selective destruction of homologous RNAs leading to sequence-specific suppression of gene expression, called post-transcriptional gene silencing (PTGS). Part of a broad host defense response against viral infection and transposons. The chain is Dicer-like protein 1 (DCL-1) from Cryphonectria parasitica (Chestnut blight fungus).